The following is a 257-amino-acid chain: Ribosomal RNA small subunit methyltransferase A (257 aa).

S-adenosyl-L-methionine is bound by residues Asn-12, Leu-14, Gly-39, Glu-60, Asp-85, and Asn-105.

Belongs to the class I-like SAM-binding methyltransferase superfamily. rRNA adenine N(6)-methyltransferase family. RsmA subfamily.

It is found in the cytoplasm. The catalysed reaction is adenosine(1518)/adenosine(1519) in 16S rRNA + 4 S-adenosyl-L-methionine = N(6)-dimethyladenosine(1518)/N(6)-dimethyladenosine(1519) in 16S rRNA + 4 S-adenosyl-L-homocysteine + 4 H(+). Functionally, specifically dimethylates two adjacent adenosines (A1518 and A1519) in the loop of a conserved hairpin near the 3'-end of 16S rRNA in the 30S particle. May play a critical role in biogenesis of 30S subunits. This is Ribosomal RNA small subunit methyltransferase A from Methylococcus capsulatus (strain ATCC 33009 / NCIMB 11132 / Bath).